The following is a 429-amino-acid chain: Enolase (429 aa).

Residue Gln162 coordinates (2R)-2-phosphoglycerate. Catalysis depends on Glu204, which acts as the Proton donor. Mg(2+)-binding residues include Asp241, Glu283, and Asp310. (2R)-2-phosphoglycerate contacts are provided by Lys335, Arg364, Ser365, and Lys386. Lys335 (proton acceptor) is an active-site residue.

It belongs to the enolase family. The cofactor is Mg(2+).

It is found in the cytoplasm. The protein localises to the secreted. Its subcellular location is the cell surface. The enzyme catalyses (2R)-2-phosphoglycerate = phosphoenolpyruvate + H2O. The protein operates within carbohydrate degradation; glycolysis; pyruvate from D-glyceraldehyde 3-phosphate: step 4/5. In terms of biological role, catalyzes the reversible conversion of 2-phosphoglycerate (2-PG) into phosphoenolpyruvate (PEP). It is essential for the degradation of carbohydrates via glycolysis. The polypeptide is Enolase (Mycobacterium bovis (strain BCG / Pasteur 1173P2)).